A 101-amino-acid chain; its full sequence is Large ribosomal subunit protein uL24 (101 aa).

This sequence belongs to the universal ribosomal protein uL24 family. In terms of assembly, part of the 50S ribosomal subunit.

Functionally, one of two assembly initiator proteins, it binds directly to the 5'-end of the 23S rRNA, where it nucleates assembly of the 50S subunit. In terms of biological role, one of the proteins that surrounds the polypeptide exit tunnel on the outside of the subunit. This chain is Large ribosomal subunit protein uL24, found in Streptococcus uberis (strain ATCC BAA-854 / 0140J).